Here is a 496-residue protein sequence, read N- to C-terminus: MLPKRRRVRAGSPHSAVASSTPPSVVRFPDVAIYLAEPRMGRSRRAFLTRLARSKGFRVLDAYSSKVTHVVMEGTSAKEAICWQKNMDALPTGCPQPALLDISWFTESMAAGQPVPEEGRHHLEVAEPRKEPPVSASMPAYACQRPSPLTHHNTLLSEALETLAEAAGFEANEGRLLSFSRAASVLKSLPCPVASLSQLHGLPYFGEHSTRVIQELLEHGTCEEVKQVRCSERYQTMKLFTQVFGVGVKTANRWYQEGLRTLDELREQPQRLTQQQKAGLQYYQDLSTPVRRADAEALQQLIEAAVRQTLPGATVTLTGGFRRGKLQGHDVDFLITHPEEGQEVGLLPKVMSCLQSQGLVLYHQYHRSHLADSAHNLRQRSSTMDAFERSFCILGLPQPQQAALAGALPPCPTWKAVRVDLVVTPSSQFPFALLGWTGSQFFERELRRFSRQEKGLWLNSHGLFDPEQKRVFHATSEEDVFRLLGLKYLPPEQRNA.

The tract at residues 1 to 22 (MLPKRRRVRAGSPHSAVASSTP) is disordered. Ser12 is modified (phosphoserine). Residues 12–22 (SPHSAVASSTP) are compositionally biased toward low complexity. The BRCT domain occupies 23–122 (PSVVRFPDVA…QPVPEEGRHH (100 aa)). Na(+) contacts are provided by Thr241 and Val243. An involved in ssDNA binding region spans residues 323–332 (RGKLQGHDVD). Residues Asp330, Asp332, and Asp420 each coordinate Mg(2+).

This sequence belongs to the DNA polymerase type-X family. It depends on Mg(2+) as a cofactor.

The protein localises to the nucleus. The catalysed reaction is DNA(n) + a 2'-deoxyribonucleoside 5'-triphosphate = DNA(n+1) + diphosphate. Functionally, gap-filling polymerase involved in repair of DNA double-strand breaks by non-homologous end joining (NHEJ). Participates in immunoglobulin (Ig) light chain gene rearrangement in V(D)J recombination. The polypeptide is DNA-directed DNA/RNA polymerase mu (Polm) (Mus musculus (Mouse)).